Consider the following 396-residue polypeptide: Ubiquitin-like modifier-activating enzyme 5 (396 aa).

Residues Gly76, Asp97, Lys120, Asn143, and Asn177 each contribute to the ATP site. Positions 219 and 222 each coordinate Zn(2+). Cys243 acts as the Glycyl thioester intermediate in catalysis. Zn(2+)-binding residues include Cys296 and Cys301.

The protein belongs to the ubiquitin-activating E1 family. UBA5 subfamily.

E1-like enzyme which activates UFM1. This is Ubiquitin-like modifier-activating enzyme 5 from Drosophila ananassae (Fruit fly).